The primary structure comprises 162 residues: L-amino acid N-acetyltransferase AaaT (162 aa).

Residues 4–162 (IVIRHAETRD…VDAYYMARVK (159 aa)) enclose the N-acetyltransferase domain.

The protein belongs to the acetyltransferase family.

The catalysed reaction is L-phenylalanine + acetyl-CoA = N-acetyl-L-phenylalanine + CoA + H(+). It carries out the reaction L-methionine + acetyl-CoA = N-acetyl-L-methionine + CoA + H(+). Catalyzes the N-acetylation of L-phenylalanine and L-methionine using acetyl-CoA as acetyl donor in vitro. Cannot accept L-tyrosine as substrate and propionyl-CoA, succinyl-CoA or (S)-methylmalonyl-CoA as acyl donors. Is also able to acetylate and thus detoxify several nonhydrolyzable aminoacyl adenylates, but not the processed form of the peptide-nucleotide antibiotic microcin C (McC). When overproduced, provides complete resistance to leucyl sulfamoyl adenylate (LSA) and partial resistance to alanyl sulfamoyl adenylate (ASA) and phenylalanyl sulfamoyl adenylate (FSA). Therefore, may protect bacteria from various toxic aminoacyl nucleotides, either exogenous or those generated inside the cell during normal metabolism. The sequence is that of L-amino acid N-acetyltransferase AaaT from Escherichia coli (strain K12).